We begin with the raw amino-acid sequence, 515 residues long: 2,3-bisphosphoglycerate-independent phosphoglycerate mutase 1 (515 aa).

Positions 14 and 64 each coordinate Mn(2+). Residue S64 is the Phosphoserine intermediate of the active site. Substrate contacts are provided by residues H125, 155-156 (RD), R187, R193, 264-267 (RADR), and K337. 5 residues coordinate Mn(2+): D404, H408, D445, H446, and H464.

The protein belongs to the BPG-independent phosphoglycerate mutase family. It depends on Mn(2+) as a cofactor.

The catalysed reaction is (2R)-2-phosphoglycerate = (2R)-3-phosphoglycerate. The protein operates within carbohydrate degradation; glycolysis; pyruvate from D-glyceraldehyde 3-phosphate: step 3/5. Functionally, catalyzes the interconversion of 2-phosphoglycerate and 3-phosphoglycerate. The polypeptide is 2,3-bisphosphoglycerate-independent phosphoglycerate mutase 1 (Methanosarcina acetivorans (strain ATCC 35395 / DSM 2834 / JCM 12185 / C2A)).